We begin with the raw amino-acid sequence, 305 residues long: Dihydroorotate dehydrogenase B (NAD(+)), catalytic subunit (305 aa).

FMN is bound by residues S23 and 47–48 (KG). Residues K47 and 71–75 (NAIGL) contribute to the substrate site. Residues N101 and N129 each coordinate FMN. Position 129 (N129) interacts with substrate. The Nucleophile role is filled by C132. Residues K167 and I193 each coordinate FMN. Residue 194–195 (NT) participates in substrate binding. FMN is bound by residues G219, 245–246 (GG), and 267–268 (GT).

The protein belongs to the dihydroorotate dehydrogenase family. Type 1 subfamily. As to quaternary structure, heterotetramer of 2 PyrK and 2 PyrD type B subunits. FMN is required as a cofactor.

It is found in the cytoplasm. It carries out the reaction (S)-dihydroorotate + NAD(+) = orotate + NADH + H(+). It participates in pyrimidine metabolism; UMP biosynthesis via de novo pathway; orotate from (S)-dihydroorotate (NAD(+) route): step 1/1. Functionally, catalyzes the conversion of dihydroorotate to orotate with NAD(+) as electron acceptor. This is Dihydroorotate dehydrogenase B (NAD(+)), catalytic subunit (pyrD) from Citrifermentans bemidjiense (strain ATCC BAA-1014 / DSM 16622 / JCM 12645 / Bem) (Geobacter bemidjiensis).